A 78-amino-acid chain; its full sequence is MKMKTKIFRVKGKFLMGDKLQPFTKELNAIREEEIYERLYSEFGSKHRVPRSKVKIEEIEEISPEEVQDPVVKALVQR.

This sequence belongs to the eukaryotic ribosomal protein eL20 family. In terms of assembly, part of the 50S ribosomal subunit. Binds 23S rRNA.

The polypeptide is Large ribosomal subunit protein eL20 (Methanothermobacter thermautotrophicus (strain ATCC 29096 / DSM 1053 / JCM 10044 / NBRC 100330 / Delta H) (Methanobacterium thermoautotrophicum)).